The primary structure comprises 332 residues: Apoptosis-enhancing nuclease (332 aa).

Residues 1–102 (MVPREVPESS…VPREAPSSGP (102 aa)) are disordered. Over residues 20–36 (ARRRHKRRSRQHQRFMA) the composition is skewed to basic residues. The short motif at 21 to 29 (RRRHKRRSR) is the Nucleolar localization signal element. Residues 63–73 (QTPAGTEASGN) are compositionally biased toward polar residues. Residues 105–261 (YVAIDCEMVG…EDAMTAMELY (157 aa)) enclose the Exonuclease domain. A Nuclear localization signal motif is present at residues 160-183 (RQHMHKAIPFQVAQKEILKLLKGK). A disordered region spans residues 272–332 (VASTAKAHPE…EGQGARSAPP (61 aa)). Residues 310–321 (GDTREAQDRQEG) are compositionally biased toward basic and acidic residues.

The protein localises to the nucleus. The protein resides in the nucleolus. Its function is as follows. Exonuclease with activity against single- and double-stranded DNA and RNA. Mediates p53-induced apoptosis. When induced by p53 following DNA damage, digests double-stranded DNA to form single-stranded DNA and amplifies DNA damage signals, leading to enhancement of apoptosis. The chain is Apoptosis-enhancing nuclease from Rattus norvegicus (Rat).